A 159-amino-acid polypeptide reads, in one-letter code: Ribosomal RNA large subunit methyltransferase H (159 aa).

S-adenosyl-L-methionine-binding positions include leucine 76, glycine 108, and 127 to 132 (LSDMTF).

It belongs to the RNA methyltransferase RlmH family. As to quaternary structure, homodimer.

Its subcellular location is the cytoplasm. The catalysed reaction is pseudouridine(1915) in 23S rRNA + S-adenosyl-L-methionine = N(3)-methylpseudouridine(1915) in 23S rRNA + S-adenosyl-L-homocysteine + H(+). Functionally, specifically methylates the pseudouridine at position 1915 (m3Psi1915) in 23S rRNA. The chain is Ribosomal RNA large subunit methyltransferase H from Acetivibrio thermocellus (strain ATCC 27405 / DSM 1237 / JCM 9322 / NBRC 103400 / NCIMB 10682 / NRRL B-4536 / VPI 7372) (Clostridium thermocellum).